Reading from the N-terminus, the 260-residue chain is Late transcription factor 1 (260 aa).

It belongs to the chordopoxvirinae VLTF-1 family. Interacts with the late transcription factors VLTF-2 and VLTF-3. Interacts with the late transcription elongation factor VLTF-4. Interacts with itself.

Associates with RNA polymerase to initiate transcription from late gene promoters. The chain is Late transcription factor 1 (OPG093) from Homo sapiens (Human).